The chain runs to 188 residues: EP300-interacting inhibitor of differentiation 1 (188 aa).

Positions 1-122 (MSEMAELSEL…PEEEQLSGAG (122 aa)) are disordered. 2 stretches are compositionally biased toward acidic residues: residues 53–64 (LEEEGPMEEEEA) and 94–117 (FESE…EEEQ). The tract at residues 55 to 121 (EEGPMEEEEA…YPEEEQLSGA (67 aa)) is interaction with NR0B2. The short motif at 179-183 (LGCDE) is the LXCXE motif element.

In terms of assembly, interacts via its LXCXE motif with the entire pocket region of RB1. Interacts with EP300, NR0B2 and TRIM27.

Its subcellular location is the nucleus. The protein localises to the cytoplasm. In terms of biological role, interacts with RB1 and EP300 and acts as a repressor of MYOD1 transactivation. Inhibits EP300 and CBP histone acetyltransferase activity. May be involved in coupling cell cycle exit to the transcriptional activation of genes required for cellular differentiation. May act as a candidate coinhibitory factor for NR0B2 that can be directly linked to transcription inhibitory mechanisms. The protein is EP300-interacting inhibitor of differentiation 1 of Pongo abelii (Sumatran orangutan).